Consider the following 375-residue polypeptide: Probable serine/threonine-protein kinase PBL28 (375 aa).

T65 bears the Phosphothreonine mark. Residues 76-356 (FSDENLLGKG…MDCVKELQLI (281 aa)) enclose the Protein kinase domain. Residues 82 to 90 (LGKGGFGRV) and K104 contribute to the ATP site. Y152 bears the Phosphotyrosine mark. D205 functions as the Proton acceptor in the catalytic mechanism. The residue at position 245 (T245) is a Phosphothreonine. Y253 bears the Phosphotyrosine mark.

Belongs to the protein kinase superfamily. Ser/Thr protein kinase family.

The protein resides in the cell membrane. The catalysed reaction is L-seryl-[protein] + ATP = O-phospho-L-seryl-[protein] + ADP + H(+). It catalyses the reaction L-threonyl-[protein] + ATP = O-phospho-L-threonyl-[protein] + ADP + H(+). In terms of biological role, may be involved in plant defense signaling. In Arabidopsis thaliana (Mouse-ear cress), this protein is Probable serine/threonine-protein kinase PBL28.